The following is a 517-amino-acid chain: Crotonobetaine/carnitine--CoA ligase (517 aa).

The protein belongs to the ATP-dependent AMP-binding enzyme family.

The enzyme catalyses 4-(trimethylamino)butanoate + ATP + CoA = 4-(trimethylamino)butanoyl-CoA + AMP + diphosphate. It catalyses the reaction crotonobetaine + ATP + CoA = crotonobetainyl-CoA + AMP + diphosphate. The catalysed reaction is (R)-carnitine + ATP + CoA = (R)-carnitinyl-CoA + AMP + diphosphate. It functions in the pathway amine and polyamine metabolism; carnitine metabolism. Functionally, catalyzes the transfer of CoA to carnitine, generating the initial carnitinyl-CoA needed for the CaiB reaction cycle. Also has activity toward crotonobetaine and gamma-butyrobetaine. This is Crotonobetaine/carnitine--CoA ligase from Escherichia coli O45:K1 (strain S88 / ExPEC).